The sequence spans 157 residues: Small ribosomal subunit protein uS7 (157 aa).

It belongs to the universal ribosomal protein uS7 family. Part of the 30S ribosomal subunit. Contacts proteins S9 and S11.

Its function is as follows. One of the primary rRNA binding proteins, it binds directly to 16S rRNA where it nucleates assembly of the head domain of the 30S subunit. Is located at the subunit interface close to the decoding center, probably blocks exit of the E-site tRNA. The chain is Small ribosomal subunit protein uS7 from Desulfotalea psychrophila (strain LSv54 / DSM 12343).